Reading from the N-terminus, the 260-residue chain is Large ribosomal subunit protein uL2 (260 aa).

The tract at residues 208–230 is disordered; it reads EHPHGGGNHQHIGHPSTVRRDAS.

It belongs to the universal ribosomal protein uL2 family.

Its subcellular location is the cytoplasm. The polypeptide is Large ribosomal subunit protein uL2 (Caenorhabditis elegans).